The sequence spans 461 residues: Cysteine--tRNA ligase (461 aa).

A Zn(2+)-binding site is contributed by C28. The 'HIGH' region signature appears at 30–40 (ITIYDLCHIGH). 3 residues coordinate Zn(2+): C209, H234, and E238. The short motif at 266–270 (KMSKS) is the 'KMSKS' region element. Residue K269 participates in ATP binding.

Belongs to the class-I aminoacyl-tRNA synthetase family. In terms of assembly, monomer. Zn(2+) is required as a cofactor.

Its subcellular location is the cytoplasm. The enzyme catalyses tRNA(Cys) + L-cysteine + ATP = L-cysteinyl-tRNA(Cys) + AMP + diphosphate. The protein is Cysteine--tRNA ligase of Yersinia pseudotuberculosis serotype O:3 (strain YPIII).